The primary structure comprises 114 residues: UPF0342 protein LCA_0622 (114 aa).

Belongs to the UPF0342 family.

This chain is UPF0342 protein LCA_0622, found in Latilactobacillus sakei subsp. sakei (strain 23K) (Lactobacillus sakei subsp. sakei).